The primary structure comprises 224 residues: 7-cyano-7-deazaguanine synthase (224 aa).

9 to 19 (LSGGLDSATVL) serves as a coordination point for ATP. 4 residues coordinate Zn(2+): Cys189, Cys199, Cys202, and Cys205.

The protein belongs to the QueC family. Zn(2+) is required as a cofactor.

The enzyme catalyses 7-carboxy-7-deazaguanine + NH4(+) + ATP = 7-cyano-7-deazaguanine + ADP + phosphate + H2O + H(+). It participates in purine metabolism; 7-cyano-7-deazaguanine biosynthesis. In terms of biological role, catalyzes the ATP-dependent conversion of 7-carboxy-7-deazaguanine (CDG) to 7-cyano-7-deazaguanine (preQ(0)). The chain is 7-cyano-7-deazaguanine synthase from Ralstonia pickettii (strain 12J).